Here is a 56-residue protein sequence, read N- to C-terminus: Photosystem II reaction center protein K (56 aa).

Residues 1–19 (MLNFLLQNTFVLWSNFILC) constitute a propeptide that is removed on maturation. Residues 35–55 (MPVIPVFFFLLAFVWQAAVSF) traverse the membrane as a helical segment.

It belongs to the PsbK family. PSII is composed of 1 copy each of membrane proteins PsbA, PsbB, PsbC, PsbD, PsbE, PsbF, PsbH, PsbI, PsbJ, PsbK, PsbL, PsbM, PsbT, PsbX, PsbY, PsbZ, Psb30/Ycf12, at least 3 peripheral proteins of the oxygen-evolving complex and a large number of cofactors. It forms dimeric complexes.

The protein localises to the plastid. Its subcellular location is the chloroplast thylakoid membrane. Functionally, one of the components of the core complex of photosystem II (PSII). PSII is a light-driven water:plastoquinone oxidoreductase that uses light energy to abstract electrons from H(2)O, generating O(2) and a proton gradient subsequently used for ATP formation. It consists of a core antenna complex that captures photons, and an electron transfer chain that converts photonic excitation into a charge separation. The protein is Photosystem II reaction center protein K of Welwitschia mirabilis (Tree tumbo).